Here is a 365-residue protein sequence, read N- to C-terminus: MTRLTLALDVMGGDFGPSVTVPAALQALNSNSQLTLLLVGDPDAITPLLAKADFEQRSRLQIIPAQSVIASDARPAQAIRSSRGSSMRVALELVKEGRAEACVSAGNTGALMGLAKLLLKPIEGIERPALVTVLPHQQKGKTVVLDLGANVDCDSTMLVQFAVMGAVLAEEVVGMTNPRVALLNIGEEEMKGLSSIRDAAAVLKTLPSLNYIGYLEANELLTGKTDVLVCDGFTGNVTLKTMEGVVRMFLSLLKSQGEGKKRSWWLLLLKRWLQKSLARRFSHLNPDQYNGACLLGLRGSVIKSHGAANQRAFSVAIEQAVQAVQRQIPQRIAARLESLYPAGFALPESDSDVNSRQQSGTNGHD.

This sequence belongs to the PlsX family. In terms of assembly, homodimer. Probably interacts with PlsY.

The protein localises to the cytoplasm. It carries out the reaction a fatty acyl-[ACP] + phosphate = an acyl phosphate + holo-[ACP]. The protein operates within lipid metabolism; phospholipid metabolism. Functionally, catalyzes the reversible formation of acyl-phosphate (acyl-PO(4)) from acyl-[acyl-carrier-protein] (acyl-ACP). This enzyme utilizes acyl-ACP as fatty acyl donor, but not acyl-CoA. This chain is Phosphate acyltransferase, found in Klebsiella pneumoniae (strain 342).